A 208-amino-acid chain; its full sequence is Small ribosomal subunit protein uS4 (208 aa).

A disordered region spans residues 28 to 48 (YFEKRPYPPGEHGRARRRTES). Positions 95–159 (MRLDALVLRS…ARTPFQVAAA (65 aa)) constitute an S4 RNA-binding domain.

This sequence belongs to the universal ribosomal protein uS4 family. Part of the 30S ribosomal subunit. Contacts protein S5. The interaction surface between S4 and S5 is involved in control of translational fidelity.

Functionally, one of the primary rRNA binding proteins, it binds directly to 16S rRNA where it nucleates assembly of the body of the 30S subunit. With S5 and S12 plays an important role in translational accuracy. This Beutenbergia cavernae (strain ATCC BAA-8 / DSM 12333 / CCUG 43141 / JCM 11478 / NBRC 16432 / NCIMB 13614 / HKI 0122) protein is Small ribosomal subunit protein uS4.